The following is a 308-amino-acid chain: Ribonuclease HIII (308 aa).

The region spanning 91–308 is the RNase H type-2 domain; that stretch reads KNVIGSDEVG…TEKALKMVKK (218 aa). A divalent metal cation contacts are provided by Asp-97, Glu-98, and Asp-202.

It belongs to the RNase HII family. RnhC subfamily. It depends on Mn(2+) as a cofactor. The cofactor is Mg(2+).

It is found in the cytoplasm. The enzyme catalyses Endonucleolytic cleavage to 5'-phosphomonoester.. Its function is as follows. Endonuclease that specifically degrades the RNA of RNA-DNA hybrids. This Listeria monocytogenes serotype 4b (strain CLIP80459) protein is Ribonuclease HIII.